A 158-amino-acid chain; its full sequence is C-type lectin lectoxin-Thr1 (158 aa).

A signal peptide spans 1-23; sequence MGRFIFATLGLLLVAFSINGAKG. Cystine bridges form between cysteine 26-cysteine 37, cysteine 54-cysteine 154, and cysteine 129-cysteine 146. Positions 33–155 constitute a C-type lectin domain; it reads LKGFCYKVFN…CASTRAYLCK (123 aa). The Mannose-binding motif lies at 119–121; the sequence is EPN. Ca(2+)-binding residues include glutamate 127, asparagine 142, and aspartate 143.

This sequence belongs to the true venom lectin family. As to expression, expressed by the venom gland.

It is found in the secreted. Functionally, mannose-binding lectin which recognizes specific carbohydrate structures and agglutinates a variety of animal cells by binding to cell-surface glycoproteins and glycolipids. May be a calcium-dependent lectin. This is C-type lectin lectoxin-Thr1 from Thrasops jacksonii (Jackson's black tree snake).